The following is a 329-amino-acid chain: Lipoyl synthase (329 aa).

Positions 72, 77, 83, 98, 102, 105, and 313 each coordinate [4Fe-4S] cluster. A Radical SAM core domain is found at Cys83–Glu303.

It belongs to the radical SAM superfamily. Lipoyl synthase family. [4Fe-4S] cluster serves as cofactor.

Its subcellular location is the cytoplasm. It catalyses the reaction [[Fe-S] cluster scaffold protein carrying a second [4Fe-4S](2+) cluster] + N(6)-octanoyl-L-lysyl-[protein] + 2 oxidized [2Fe-2S]-[ferredoxin] + 2 S-adenosyl-L-methionine + 4 H(+) = [[Fe-S] cluster scaffold protein] + N(6)-[(R)-dihydrolipoyl]-L-lysyl-[protein] + 4 Fe(3+) + 2 hydrogen sulfide + 2 5'-deoxyadenosine + 2 L-methionine + 2 reduced [2Fe-2S]-[ferredoxin]. It participates in protein modification; protein lipoylation via endogenous pathway; protein N(6)-(lipoyl)lysine from octanoyl-[acyl-carrier-protein]: step 2/2. Functionally, catalyzes the radical-mediated insertion of two sulfur atoms into the C-6 and C-8 positions of the octanoyl moiety bound to the lipoyl domains of lipoate-dependent enzymes, thereby converting the octanoylated domains into lipoylated derivatives. The sequence is that of Lipoyl synthase from Legionella pneumophila (strain Corby).